Reading from the N-terminus, the 396-residue chain is Probable 20S rRNA accumulation protein 4 (396 aa).

The protein belongs to the TSR4 family.

The protein resides in the cytoplasm. The protein localises to the nucleus. Its subcellular location is the nucleolus. Its function is as follows. Required for processing of the 20S pre-rRNA at site D to generate mature 18S rRNA. This chain is Probable 20S rRNA accumulation protein 4, found in Schizosaccharomyces pombe (strain 972 / ATCC 24843) (Fission yeast).